The following is a 542-amino-acid chain: Nuclear hormone receptor family member nhr-35 (542 aa).

Positions 74-149 (NSICHICSDV…SGMRDDQVQS (76 aa)) form a DNA-binding region, nuclear receptor. NR C4-type zinc fingers lie at residues 77 to 97 (CHIC…CNGC) and 113 to 137 (CRFE…FMKC). Positions 186-438 (EYDQLLESLL…VLMEELILAE (253 aa)) constitute an NR LBD domain. The disordered stretch occupies residues 445 to 487 (RQDQTPCSIMNDTPSGSQDMCSPCPEDLLRTSTSSNSPTNSSL). Residues 448-464 (QTPCSIMNDTPSGSQDM) are compositionally biased toward polar residues. A compositionally biased stretch (low complexity) spans 475-487 (TSTSSNSPTNSSL).

It belongs to the nuclear hormone receptor family.

The protein localises to the nucleus. In terms of biological role, orphan nuclear receptor. This is Nuclear hormone receptor family member nhr-35 (nhr-35) from Caenorhabditis elegans.